The primary structure comprises 227 residues: Cytochrome c oxidase subunit 2 (227 aa).

The Mitochondrial intermembrane portion of the chain corresponds to 1 to 14 (MAHAAQVGLQDATS). A helical transmembrane segment spans residues 15-45 (PIMEELITFHDHALMIIFLICFLVLYALFLT). Over 46–59 (LTTKLTSTNISDAQ) the chain is Mitochondrial matrix. The chain crosses the membrane as a helical span at residues 60–87 (EMETIWTILPAIILVLIALPSLRILYMT). Topologically, residues 88 to 227 (DEINDPSFTI…IFEMGPVFAL (140 aa)) are mitochondrial intermembrane. The Cu cation site is built by H161, C196, E198, C200, H204, and M207. E198 contributes to the Mg(2+) binding site.

It belongs to the cytochrome c oxidase subunit 2 family. As to quaternary structure, component of the cytochrome c oxidase (complex IV, CIV), a multisubunit enzyme composed of 14 subunits. The complex is composed of a catalytic core of 3 subunits MT-CO1, MT-CO2 and MT-CO3, encoded in the mitochondrial DNA, and 11 supernumerary subunits COX4I, COX5A, COX5B, COX6A, COX6B, COX6C, COX7A, COX7B, COX7C, COX8 and NDUFA4, which are encoded in the nuclear genome. The complex exists as a monomer or a dimer and forms supercomplexes (SCs) in the inner mitochondrial membrane with NADH-ubiquinone oxidoreductase (complex I, CI) and ubiquinol-cytochrome c oxidoreductase (cytochrome b-c1 complex, complex III, CIII), resulting in different assemblies (supercomplex SCI(1)III(2)IV(1) and megacomplex MCI(2)III(2)IV(2)). Found in a complex with TMEM177, COA6, COX18, COX20, SCO1 and SCO2. Interacts with TMEM177 in a COX20-dependent manner. Interacts with COX20. Interacts with COX16. It depends on Cu cation as a cofactor.

The protein localises to the mitochondrion inner membrane. It catalyses the reaction 4 Fe(II)-[cytochrome c] + O2 + 8 H(+)(in) = 4 Fe(III)-[cytochrome c] + 2 H2O + 4 H(+)(out). Its function is as follows. Component of the cytochrome c oxidase, the last enzyme in the mitochondrial electron transport chain which drives oxidative phosphorylation. The respiratory chain contains 3 multisubunit complexes succinate dehydrogenase (complex II, CII), ubiquinol-cytochrome c oxidoreductase (cytochrome b-c1 complex, complex III, CIII) and cytochrome c oxidase (complex IV, CIV), that cooperate to transfer electrons derived from NADH and succinate to molecular oxygen, creating an electrochemical gradient over the inner membrane that drives transmembrane transport and the ATP synthase. Cytochrome c oxidase is the component of the respiratory chain that catalyzes the reduction of oxygen to water. Electrons originating from reduced cytochrome c in the intermembrane space (IMS) are transferred via the dinuclear copper A center (CU(A)) of subunit 2 and heme A of subunit 1 to the active site in subunit 1, a binuclear center (BNC) formed by heme A3 and copper B (CU(B)). The BNC reduces molecular oxygen to 2 water molecules using 4 electrons from cytochrome c in the IMS and 4 protons from the mitochondrial matrix. This Gorilla gorilla gorilla (Western lowland gorilla) protein is Cytochrome c oxidase subunit 2 (MT-CO2).